Consider the following 199-residue polypeptide: MAFELPNLPYGFDALEPHIDQQTMEIHHGKHHNTYVTKLNAAVEGTDLESKSIEEIVANLDSVPENIQTAVRNNGGGHLNHSLFWELLTPNSEEKGTVVDKIKEQWGSLDAFKEEFADKAAARFGSGWAWLVVNNGNLEIVTTPNQDNPITEGKTPILGLDVWEHAYYLKYQNKRPDYISAFWNVVNWEKVDELYNAAK.

Residues histidine 27, histidine 81, aspartate 161, and histidine 165 each coordinate Fe(3+). Mn(2+) contacts are provided by histidine 27, histidine 81, aspartate 161, and histidine 165.

The protein belongs to the iron/manganese superoxide dismutase family. As to quaternary structure, homodimer. The cofactor is Mn(2+). Fe(3+) serves as cofactor.

The catalysed reaction is 2 superoxide + 2 H(+) = H2O2 + O2. In terms of biological role, destroys superoxide anion radicals which are normally produced within the cells and which are toxic to biological systems. Catalyzes the dismutation of superoxide anion radicals into O2 and H2O2 by successive reduction and oxidation of the transition metal ion at the active site. Also contributes to the inhibition of lipid oxidation. Manganese-preferring enzyme, less active with iron than with manganese. The polypeptide is Superoxide dismutase [Mn/Fe] (sodA) (Staphylococcus xylosus).